The chain runs to 216 residues: LexA repressor (216 aa).

Residues 29–49 (RAEIAQALGFRSPNAAEDHLK) constitute a DNA-binding region (H-T-H motif). Active-site for autocatalytic cleavage activity residues include S134 and K171.

This sequence belongs to the peptidase S24 family. As to quaternary structure, homodimer.

The enzyme catalyses Hydrolysis of Ala-|-Gly bond in repressor LexA.. In terms of biological role, represses a number of genes involved in the response to DNA damage (SOS response), including recA and lexA. In the presence of single-stranded DNA, RecA interacts with LexA causing an autocatalytic cleavage which disrupts the DNA-binding part of LexA, leading to derepression of the SOS regulon and eventually DNA repair. In Bordetella parapertussis (strain 12822 / ATCC BAA-587 / NCTC 13253), this protein is LexA repressor.